The chain runs to 116 residues: Ribonuclease P protein component (116 aa).

It belongs to the RnpA family. In terms of assembly, consists of a catalytic RNA component (M1 or rnpB) and a protein subunit.

It carries out the reaction Endonucleolytic cleavage of RNA, removing 5'-extranucleotides from tRNA precursor.. In terms of biological role, RNaseP catalyzes the removal of the 5'-leader sequence from pre-tRNA to produce the mature 5'-terminus. It can also cleave other RNA substrates such as 4.5S RNA. The protein component plays an auxiliary but essential role in vivo by binding to the 5'-leader sequence and broadening the substrate specificity of the ribozyme. The chain is Ribonuclease P protein component from Leuconostoc mesenteroides subsp. mesenteroides (strain ATCC 8293 / DSM 20343 / BCRC 11652 / CCM 1803 / JCM 6124 / NCDO 523 / NBRC 100496 / NCIMB 8023 / NCTC 12954 / NRRL B-1118 / 37Y).